The primary structure comprises 688 residues: Methionine--tRNA ligase (688 aa).

A 'HIGH' region motif is present at residues 20 to 30 (PYANGSIHLGH). Residues Cys151, Cys154, Cys164, and Cys167 each contribute to the Zn(2+) site. The 'KMSKS' region motif lies at 337 to 341 (KMSKS). Position 340 (Lys340) interacts with ATP. The 102-residue stretch at 587-688 (TFAQVDLRIA…EGAQPGMRVM (102 aa)) folds into the tRNA-binding domain.

It belongs to the class-I aminoacyl-tRNA synthetase family. MetG type 1 subfamily. In terms of assembly, homodimer. Requires Zn(2+) as cofactor.

The protein resides in the cytoplasm. It carries out the reaction tRNA(Met) + L-methionine + ATP = L-methionyl-tRNA(Met) + AMP + diphosphate. Functionally, is required not only for elongation of protein synthesis but also for the initiation of all mRNA translation through initiator tRNA(fMet) aminoacylation. This is Methionine--tRNA ligase from Vibrio parahaemolyticus serotype O3:K6 (strain RIMD 2210633).